The chain runs to 122 residues: Large ribosomal subunit protein uL14c (122 aa).

It belongs to the universal ribosomal protein uL14 family. In terms of assembly, part of the 50S ribosomal subunit.

It is found in the plastid. It localises to the chloroplast. In terms of biological role, binds to 23S rRNA. The sequence is that of Large ribosomal subunit protein uL14c from Lotus japonicus (Lotus corniculatus var. japonicus).